The chain runs to 287 residues: GTPase Era (287 aa).

An Era-type G domain is found at Phe6–Lys178. The G1 stretch occupies residues Gly14 to Ser21. Gly14–Ser21 serves as a coordination point for GTP. The interval His40–Ser44 is G2. The G3 stretch occupies residues Asp62 to Gly65. GTP-binding positions include Asp62 to Ile66 and Asn124 to Asp127. Residues Asn124 to Asp127 are G4. The tract at residues Ile154 to Gly156 is G5. A KH type-2 domain is found at Leu207 to Lys282.

Belongs to the TRAFAC class TrmE-Era-EngA-EngB-Septin-like GTPase superfamily. Era GTPase family. As to quaternary structure, monomer.

It localises to the cytoplasm. Its subcellular location is the cell membrane. Its function is as follows. An essential GTPase that binds both GDP and GTP, with rapid nucleotide exchange. Plays a role in 16S rRNA processing and 30S ribosomal subunit biogenesis and possibly also in cell cycle regulation and energy metabolism. The sequence is that of GTPase Era from Buchnera aphidicola subsp. Baizongia pistaciae (strain Bp).